The sequence spans 285 residues: Ribosomal RNA small subunit methyltransferase I (285 aa).

The protein belongs to the methyltransferase superfamily. RsmI family.

The protein localises to the cytoplasm. It carries out the reaction cytidine(1402) in 16S rRNA + S-adenosyl-L-methionine = 2'-O-methylcytidine(1402) in 16S rRNA + S-adenosyl-L-homocysteine + H(+). Catalyzes the 2'-O-methylation of the ribose of cytidine 1402 (C1402) in 16S rRNA. The protein is Ribosomal RNA small subunit methyltransferase I of Mycobacterium tuberculosis (strain ATCC 25618 / H37Rv).